The following is a 697-amino-acid chain: Potassium-transporting ATPase ATP-binding subunit (697 aa).

4 helical membrane-spanning segments follow: residues 55 to 75 (PIMF…FLPS), 79 to 99 (SIPG…VLFA), 245 to 265 (LTLI…YLGF), and 271 to 291 (VLVA…LSAI). Residue Asp-324 is the 4-aspartylphosphate intermediate of the active site. ATP contacts are provided by residues Asp-361, Glu-365, 393 to 400 (FKAETRMS), and Lys-412. Residues Asp-535 and Asp-539 each contribute to the Mg(2+) site. Transmembrane regions (helical) follow at residues 605-625 (FAII…LNIM), 633-653 (AILS…PLAM), and 677-697 (GGVI…GLFI).

Belongs to the cation transport ATPase (P-type) (TC 3.A.3) family. Type IA subfamily. The system is composed of three essential subunits: KdpA, KdpB and KdpC.

The protein resides in the cell membrane. It catalyses the reaction K(+)(out) + ATP + H2O = K(+)(in) + ADP + phosphate + H(+). In terms of biological role, part of the high-affinity ATP-driven potassium transport (or Kdp) system, which catalyzes the hydrolysis of ATP coupled with the electrogenic transport of potassium into the cytoplasm. This subunit is responsible for energy coupling to the transport system and for the release of the potassium ions to the cytoplasm. The protein is Potassium-transporting ATPase ATP-binding subunit of Bacillus cereus (strain B4264).